Here is a 166-residue protein sequence, read N- to C-terminus: Protein-export protein SecB (166 aa).

Over residues 1-16 (MTDTSAAGNPTPGQQP) the composition is skewed to polar residues. The segment at 1–21 (MTDTSAAGNPTPGQQPANPPS) is disordered.

The protein belongs to the SecB family. Homotetramer, a dimer of dimers. One homotetramer interacts with 1 SecA dimer.

It localises to the cytoplasm. One of the proteins required for the normal export of preproteins out of the cell cytoplasm. It is a molecular chaperone that binds to a subset of precursor proteins, maintaining them in a translocation-competent state. It also specifically binds to its receptor SecA. The protein is Protein-export protein SecB of Hyphomonas neptunium (strain ATCC 15444).